The primary structure comprises 134 residues: uncharacterized protein (134 aa).

Residues 13–35 (FFIAFSAYLVVILLMTAVSVYYL) form a helical membrane-spanning segment.

It localises to the membrane. This is an uncharacterized protein from Archaeoglobus fulgidus (strain ATCC 49558 / DSM 4304 / JCM 9628 / NBRC 100126 / VC-16).